The following is a 208-amino-acid chain: MEGIIVRRVIPSDNSCLFNAIGYVMDKDKNKAPELRQVIAAAVASNKEKYNEAFLGKLNEEYCAWILNPDKWGGAIELSILADYYGREIAAYDIQTSRCDLYGQTRNYDERVMLIYDGLHYDALALSPFEGAEEDFDMTIYPVGKDRSIGSIEGLALNLVKDQQRKRSYTDTANFTLRCGVCQIGVIGQKEAVEHAQATGHVNFQEYK.

One can recognise an OTU domain in the interval 5-127 (IVRRVIPSDN…GLHYDALALS (123 aa)). The active site involves Asp13. Catalysis depends on Cys16, which acts as the Nucleophile. Catalysis depends on residues His120 and His201.

The protein belongs to the peptidase C85 family.

The enzyme catalyses Thiol-dependent hydrolysis of ester, thioester, amide, peptide and isopeptide bonds formed by the C-terminal Gly of ubiquitin (a 76-residue protein attached to proteins as an intracellular targeting signal).. Functionally, hydrolase that can remove conjugated ubiquitin from proteins in vitro and may therefore play an important regulatory role at the level of protein turnover by preventing degradation. Cysteine protease with a preference for 'Lys-63' and 'Lys-48' -linked ubiquitin (UB) tetramers as substrates. In Arabidopsis thaliana (Mouse-ear cress), this protein is OVARIAN TUMOR DOMAIN-containing deubiquitinating enzyme 2.